The sequence spans 305 residues: UDP-3-O-acyl-N-acetylglucosamine deacetylase (305 aa).

Positions 79, 238, and 242 each coordinate Zn(2+). Histidine 265 acts as the Proton donor in catalysis.

This sequence belongs to the LpxC family. Zn(2+) serves as cofactor.

It carries out the reaction a UDP-3-O-[(3R)-3-hydroxyacyl]-N-acetyl-alpha-D-glucosamine + H2O = a UDP-3-O-[(3R)-3-hydroxyacyl]-alpha-D-glucosamine + acetate. It functions in the pathway glycolipid biosynthesis; lipid IV(A) biosynthesis; lipid IV(A) from (3R)-3-hydroxytetradecanoyl-[acyl-carrier-protein] and UDP-N-acetyl-alpha-D-glucosamine: step 2/6. In terms of biological role, catalyzes the hydrolysis of UDP-3-O-myristoyl-N-acetylglucosamine to form UDP-3-O-myristoylglucosamine and acetate, the committed step in lipid A biosynthesis. The polypeptide is UDP-3-O-acyl-N-acetylglucosamine deacetylase (Sodalis glossinidius (strain morsitans)).